Reading from the N-terminus, the 683-residue chain is ATP-dependent zinc metalloprotease FtsH 2 (683 aa).

Polar residues predominate over residues 1 to 12 (MADQTSQNDNQN). The tract at residues 1 to 21 (MADQTSQNDNQNGSGLPGGGP) is disordered. The Cytoplasmic segment spans residues 1–28 (MADQTSQNDNQNGSGLPGGGPSGTGRGR). A helical membrane pass occupies residues 29–49 (LIIWVIAGTLLALWAYSYWGM). Residues 50–136 (GASGGERISY…VTKPESSFPW (87 aa)) are Periplasmic-facing. The chain crosses the membrane as a helical span at residues 137 to 157 (GLVIMGLLPVLLLFGVGYIFL). Over 158 to 683 (RRMQSQGQGL…ASGSADASGS (526 aa)) the chain is Cytoplasmic. ATP is bound at residue 228 to 235 (GPPGTGKT). Position 450 (histidine 450) interacts with Zn(2+). Glutamate 451 is an active-site residue. The Zn(2+) site is built by histidine 454 and aspartate 526. Positions 627–683 (VNGDTDEIGHMPTTNGAAASEENGSADDHEPDEATVIEEDGESGEGRASGSADASGS) are disordered. Acidic residues predominate over residues 655–669 (HEPDEATVIEEDGES). The segment covering 672–683 (GRASGSADASGS) has biased composition (low complexity).

The protein in the central section; belongs to the AAA ATPase family. In the C-terminal section; belongs to the peptidase M41 family. As to quaternary structure, homohexamer. Zn(2+) is required as a cofactor.

It localises to the cell inner membrane. In terms of biological role, acts as a processive, ATP-dependent zinc metallopeptidase for both cytoplasmic and membrane proteins. Plays a role in the quality control of integral membrane proteins. This is ATP-dependent zinc metalloprotease FtsH 2 from Salinibacter ruber (strain M8).